Reading from the N-terminus, the 194-residue chain is Glycerol-3-phosphate acyltransferase (194 aa).

The next 5 membrane-spanning stretches (helical) occupy residues 7 to 27, 59 to 79, 86 to 106, 116 to 136, and 157 to 177; these read LLMA…YWVC, LTLF…AMLG, GVTA…HFKG, AGLA…AAVV, and AWRL…FILI.

This sequence belongs to the PlsY family. Probably interacts with PlsX.

It is found in the cell inner membrane. The catalysed reaction is an acyl phosphate + sn-glycerol 3-phosphate = a 1-acyl-sn-glycero-3-phosphate + phosphate. It participates in lipid metabolism; phospholipid metabolism. In terms of biological role, catalyzes the transfer of an acyl group from acyl-phosphate (acyl-PO(4)) to glycerol-3-phosphate (G3P) to form lysophosphatidic acid (LPA). This enzyme utilizes acyl-phosphate as fatty acyl donor, but not acyl-CoA or acyl-ACP. The chain is Glycerol-3-phosphate acyltransferase from Hahella chejuensis (strain KCTC 2396).